The sequence spans 476 residues: UDP-N-acetylmuramate--L-alanine ligase (476 aa).

123–129 (GTHGKTT) contributes to the ATP binding site.

It belongs to the MurCDEF family.

The protein resides in the cytoplasm. It catalyses the reaction UDP-N-acetyl-alpha-D-muramate + L-alanine + ATP = UDP-N-acetyl-alpha-D-muramoyl-L-alanine + ADP + phosphate + H(+). Its pathway is cell wall biogenesis; peptidoglycan biosynthesis. Functionally, cell wall formation. This Nitrosococcus oceani (strain ATCC 19707 / BCRC 17464 / JCM 30415 / NCIMB 11848 / C-107) protein is UDP-N-acetylmuramate--L-alanine ligase.